The chain runs to 190 residues: Potassium-transporting ATPase KdpC subunit (190 aa).

The helical transmembrane segment at 10–30 (TFLFLLLITGGVYPLLTTALG) threads the bilayer.

The protein belongs to the KdpC family. As to quaternary structure, the system is composed of three essential subunits: KdpA, KdpB and KdpC.

The protein localises to the cell inner membrane. Its function is as follows. Part of the high-affinity ATP-driven potassium transport (or Kdp) system, which catalyzes the hydrolysis of ATP coupled with the electrogenic transport of potassium into the cytoplasm. This subunit acts as a catalytic chaperone that increases the ATP-binding affinity of the ATP-hydrolyzing subunit KdpB by the formation of a transient KdpB/KdpC/ATP ternary complex. The sequence is that of Potassium-transporting ATPase KdpC subunit from Escherichia coli O81 (strain ED1a).